A 399-amino-acid polypeptide reads, in one-letter code: Acetate kinase (399 aa).

Asn-8 lines the Mg(2+) pocket. Lys-15 serves as a coordination point for ATP. Arg-89 contacts substrate. The active-site Proton donor/acceptor is Asp-146. ATP-binding positions include 206–210, 283–285, and 331–335; these read HVGNG, DMR, and GMGEN. A Mg(2+)-binding site is contributed by Glu-383.

Belongs to the acetokinase family. In terms of assembly, homodimer. Mg(2+) is required as a cofactor. Requires Mn(2+) as cofactor.

The protein resides in the cytoplasm. The catalysed reaction is acetate + ATP = acetyl phosphate + ADP. It functions in the pathway metabolic intermediate biosynthesis; acetyl-CoA biosynthesis; acetyl-CoA from acetate: step 1/2. In terms of biological role, catalyzes the formation of acetyl phosphate from acetate and ATP. Can also catalyze the reverse reaction. In Streptococcus equi subsp. zooepidemicus (strain H70), this protein is Acetate kinase.